Here is a 314-residue protein sequence, read N- to C-terminus: Ketimine reductase mu-crystallin (314 aa).

Arginine 47 lines the 3,3',5-triiodo-L-thyronine pocket. NADPH-binding residues include serine 91, histidine 92, arginine 119, alanine 144, valine 146, glutamine 147, asparagine 168, arginine 169, threonine 170, asparagine 173, threonine 205, methionine 206, and valine 226. A 3,3',5-triiodo-L-thyronine-binding site is contributed by glutamate 257. Serine 292 provides a ligand contact to NADPH.

This sequence belongs to the ornithine cyclodeaminase/mu-crystallin family. As to quaternary structure, homodimer. Binds the thyroid hormone triiodothyronine (T3); T3 binding inhibits enzymatic activity. Expressed at high abundance in lens, but outside the lens it is preferentially expressed in neural tissues, retina and brain.

The protein resides in the cytoplasm. It catalyses the reaction L-pipecolate + NADP(+) = Delta(1)-piperideine-2-carboxylate + NADPH + H(+). The catalysed reaction is L-pipecolate + NAD(+) = Delta(1)-piperideine-2-carboxylate + NADH + H(+). The enzyme catalyses L-proline + NADP(+) = 1-pyrroline-2-carboxylate + NADPH + H(+). It carries out the reaction L-proline + NAD(+) = 1-pyrroline-2-carboxylate + NADH + H(+). It catalyses the reaction (3R)-1,4-thiomorpholine-3-carboxylate + NAD(+) = 3,4-dehydrothiomorpholine-3-carboxylate + NADH + 2 H(+). The catalysed reaction is (3R)-1,4-thiomorpholine-3-carboxylate + NADP(+) = 3,4-dehydrothiomorpholine-3-carboxylate + NADPH + 2 H(+). The enzyme catalyses (S)-cystathionine ketimine + NADH + 2 H(+) = (3R,5S)-2,3,5,6,7-pentahydro-1,4-thiazepine-3,5-dicarboxylate + NAD(+). It carries out the reaction (S)-cystathionine ketimine + NADPH + 2 H(+) = (3R,5S)-2,3,5,6,7-pentahydro-1,4-thiazepine-3,5-dicarboxylate + NADP(+). It catalyses the reaction (R)-lanthionine ketimine + NADPH + 2 H(+) = (3R,5R)-1,4-thiomorpholine-3,5-dicarboxylate + NADP(+). The catalysed reaction is Delta(2)-thiazoline-2-carboxylate + NADPH + 2 H(+) = L-thiazolidine-2-carboxylate + NADP(+). Functionally, catalyzes the NAD(P)H-dependent reduction of imine double bonds of a number of cyclic ketimine substrates, including sulfur-containing cyclic ketimines. Under physiological conditions, it efficiently catalyzes delta(1)-piperideine-2-carboxylate (P2C) and delta(1)-pyrroline-2-carboxylate (Pyr2C) reduction, suggesting a central role in lysine and glutamate metabolism. Additional substrates are delta(2)-thiazoline-2-carboxylate (T2C), 3,4-dehydrothiomorpholine-3-carboxylate (AECK), and (R)-lanthionine ketimine (LK) that is reduced at very low rate compared to other substrates. Also catalyzes the NAD(P)H-dependent reduction of (S)-cystathionine ketimine (CysK). The sequence is that of Ketimine reductase mu-crystallin (CRYM) from Macropus fuliginosus (Western gray kangaroo).